We begin with the raw amino-acid sequence, 1242 residues long: ATP-dependent helicase/nuclease subunit A (1242 aa).

A UvrD-like helicase ATP-binding domain is found at 12 to 487 (SRWTDEQWKA…IDLASNFRSR (476 aa)). Position 33 to 40 (33 to 40 (AAAGSGKT)) interacts with ATP. A UvrD-like helicase C-terminal domain is found at 514-808 (AAQLKYGADY…RIMTIHSSKG (295 aa)).

It belongs to the helicase family. AddA subfamily. In terms of assembly, heterodimer of AddA and AddB/RexB. Requires Mg(2+) as cofactor.

The enzyme catalyses Couples ATP hydrolysis with the unwinding of duplex DNA by translocating in the 3'-5' direction.. The catalysed reaction is ATP + H2O = ADP + phosphate + H(+). The heterodimer acts as both an ATP-dependent DNA helicase and an ATP-dependent, dual-direction single-stranded exonuclease. Recognizes the chi site generating a DNA molecule suitable for the initiation of homologous recombination. The AddA nuclease domain is required for chi fragment generation; this subunit has the helicase and 3' -&gt; 5' nuclease activities. The chain is ATP-dependent helicase/nuclease subunit A from Geobacillus kaustophilus (strain HTA426).